The sequence spans 243 residues: GTP cyclohydrolase 1 type 2 (243 aa).

Positions 63, 64, 102, 209, and 213 each coordinate a divalent metal cation.

This sequence belongs to the GTP cyclohydrolase I type 2/NIF3 family. Homohexamer.

It carries out the reaction GTP + H2O = 7,8-dihydroneopterin 3'-triphosphate + formate + H(+). It participates in cofactor biosynthesis; 7,8-dihydroneopterin triphosphate biosynthesis; 7,8-dihydroneopterin triphosphate from GTP: step 1/1. Functionally, converts GTP to dihydroneopterin triphosphate. Is not active with GDP, GMP, ATP, CTP or UTP as substrate. This is GTP cyclohydrolase 1 type 2 from Helicobacter pylori (strain ATCC 700392 / 26695) (Campylobacter pylori).